Reading from the N-terminus, the 212-residue chain is Histone H1.2 (212 aa).

A compositionally biased stretch (low complexity) spans 1–17 (MSEAAPAAPAAAPPAEK). The disordered stretch occupies residues 1-41 (MSEAAPAAPAAAPPAEKAPAKKKAAKKPAGVRRKASGPPVS). At S2 the chain carries N-acetylserine. S2 carries the post-translational modification Phosphoserine. Position 17 is an N6-acetyllysine (K17). Positions 20-35 (AKKKAAKKPAGVRRKA) are enriched in basic residues. N6-(2-hydroxyisobutyryl)lysine is present on residues K23, K26, and K27. K34 is modified (N6-(beta-hydroxybutyryl)lysine; alternate). K34 bears the N6-crotonyllysine; alternate mark. K34 carries the post-translational modification N6-methyllysine; alternate. Residues 36-109 (SGPPVSELIT…GASGSFKLNK (74 aa)) form the H15 domain. Residue K46 is modified to N6-(2-hydroxyisobutyryl)lysine. The residue at position 52 (K52) is an N6-(beta-hydroxybutyryl)lysine; alternate. K52 is subject to N6-(2-hydroxyisobutyryl)lysine; alternate. R54 carries the citrulline modification. At K63 the chain carries N6-(2-hydroxyisobutyryl)lysine. Position 64 is an N6-(beta-hydroxybutyryl)lysine; alternate (K64). N6-crotonyllysine; alternate is present on K64. At K64 the chain carries N6-(2-hydroxyisobutyryl)lysine; alternate. N6-(2-hydroxyisobutyryl)lysine is present on residues K75 and K81. K85 and K90 each carry N6-(beta-hydroxybutyryl)lysine; alternate. K85, K90, and K97 each carry N6-crotonyllysine; alternate. N6-(2-hydroxyisobutyryl)lysine; alternate is present on residues K85, K90, and K97. The residue at position 97 (K97) is an N6-succinyllysine; alternate. The tract at residues 98–212 (GTGASGSFKL…KAKKVAAKKK (115 aa)) is disordered. S104 is subject to Phosphoserine; by PKC. The residue at position 106 (K106) is an N6-(beta-hydroxybutyryl)lysine. An N6-(2-hydroxyisobutyryl)lysine mark is found at K110, K117, K121, K129, and K136. Residues 121-148 (KKAGAAKAKKPAGAAKKPKKATGAATPK) are compositionally biased toward low complexity. T146 bears the Phosphothreonine mark. K148 is modified (N6-(2-hydroxyisobutyryl)lysine). Basic residues predominate over residues 149-160 (KAAKKTPKKAKK). N6-crotonyllysine; alternate is present on residues K159 and K168. N6-(2-hydroxyisobutyryl)lysine; alternate is present on residues K159 and K168. Positions 169–212 (KVAKSPKKAKVTKPKKVKSASKAVKPKAAKPKVAKAKKVAAKKK) are enriched in basic residues. Position 186 is an N6-methyllysine; by EHMT1 and EHMT2 (K186). At S187 the chain carries ADP-ribosylserine. K212 carries the N6-(2-hydroxyisobutyryl)lysine modification.

Belongs to the histone H1/H5 family. In terms of assembly, interacts with TSC22D1 isoform 2. H1 histones are progressively phosphorylated during the cell cycle, becoming maximally phosphorylated during late G2 phase and M phase, and being dephosphorylated sharply thereafter. Post-translationally, crotonylation (Kcr) is specifically present in male germ cells and marks testis-specific genes in post-meiotic cells, including X-linked genes that escape sex chromosome inactivation in haploid cells. Crotonylation marks active promoters and enhancers and confers resistance to transcriptional repressors. It is also associated with post-meiotically activated genes on autosomes. In terms of processing, ADP-ribosylated on Ser-187 in response to DNA damage. Citrullination at Arg-54 (H1R54ci) by PADI4 takes place within the DNA-binding site of H1 and results in its displacement from chromatin and global chromatin decondensation, thereby promoting pluripotency and stem cell maintenance. Post-translationally, hydroxybutyrylation of histones is induced by starvation.

The protein localises to the nucleus. It is found in the chromosome. Functionally, histone H1 protein binds to linker DNA between nucleosomes forming the macromolecular structure known as the chromatin fiber. Histones H1 are necessary for the condensation of nucleosome chains into higher-order structured fibers. Also acts as a regulator of individual gene transcription through chromatin remodeling, nucleosome spacing and DNA methylation. This chain is Histone H1.2, found in Mus musculus (Mouse).